The following is a 296-amino-acid chain: Meiotically up-regulated gene 2 protein (296 aa).

Belongs to the UPF0612 family.

The protein resides in the cytoplasm. It localises to the nucleus. In terms of biological role, has a role in meiosis. The polypeptide is Meiotically up-regulated gene 2 protein (mug2) (Schizosaccharomyces pombe (strain 972 / ATCC 24843) (Fission yeast)).